Here is a 482-residue protein sequence, read N- to C-terminus: L-propargylglycine--L-glutamate ligase (482 aa).

The catalysed reaction is L-propargylglycine + L-glutamate + ATP = L-gamma-glutamyl-L-propargylglycine + ADP + phosphate + H(+). Its pathway is amino-acid metabolism. It functions in the pathway antibiotic biosynthesis. Functionally, involved in the biosynthesis of terminal alkyne-containing amino acids such as L-beta-ethynylserine, that are produced as antibiotics by S.cattleya. Catalyzes the ATP-dependent ligation of L-propargylglycine to L-glutamate to form the dipeptide L-gamma-glutamyl-L-propargylglycine. Is selective for L-propargylglycine over norvaline, allylglycine and the standard proteinogenic amino acids, except L-cysteine which can be used as a substrate to a lesser extent. The sequence is that of L-propargylglycine--L-glutamate ligase from Streptantibioticus cattleyicolor (strain ATCC 35852 / DSM 46488 / JCM 4925 / NBRC 14057 / NRRL 8057) (Streptomyces cattleya).